The sequence spans 173 residues: MAIILGIDPGSRVTGYGVIRQVGRQLSYLGSGCIRTKVDDLPSRLKLIYAGVTEIITQFQPDYFAIEQVFMAKNADSALKLGQARGVAIVAAVNQELPVFEYAARQVKQTVVGIGSAEKSQVQHMVRTLLKLPANPQADAADALAIAITHCHVSQNAMQMSESRLNLARGRLR.

Active-site residues include Asp-8, Glu-67, and Asp-139. Residues Asp-8, Glu-67, and Asp-139 each contribute to the Mg(2+) site.

It belongs to the RuvC family. In terms of assembly, homodimer which binds Holliday junction (HJ) DNA. The HJ becomes 2-fold symmetrical on binding to RuvC with unstacked arms; it has a different conformation from HJ DNA in complex with RuvA. In the full resolvosome a probable DNA-RuvA(4)-RuvB(12)-RuvC(2) complex forms which resolves the HJ. The cofactor is Mg(2+).

Its subcellular location is the cytoplasm. It catalyses the reaction Endonucleolytic cleavage at a junction such as a reciprocal single-stranded crossover between two homologous DNA duplexes (Holliday junction).. Functionally, the RuvA-RuvB-RuvC complex processes Holliday junction (HJ) DNA during genetic recombination and DNA repair. Endonuclease that resolves HJ intermediates. Cleaves cruciform DNA by making single-stranded nicks across the HJ at symmetrical positions within the homologous arms, yielding a 5'-phosphate and a 3'-hydroxyl group; requires a central core of homology in the junction. The consensus cleavage sequence is 5'-(A/T)TT(C/G)-3'. Cleavage occurs on the 3'-side of the TT dinucleotide at the point of strand exchange. HJ branch migration catalyzed by RuvA-RuvB allows RuvC to scan DNA until it finds its consensus sequence, where it cleaves and resolves the cruciform DNA. In terms of biological role, plays a role in recovery after DNA ADP-ribosylation, probably via replication fork reversal. This is Crossover junction endodeoxyribonuclease RuvC from Escherichia coli O127:H6 (strain E2348/69 / EPEC).